The sequence spans 429 residues: Prenyltransferase okaC (429 aa).

Positions 101, 189, 191, 257, 259, 342, 406, and 410 each coordinate dimethylallyl diphosphate.

The protein belongs to the tryptophan dimethylallyltransferase family.

It catalyses the reaction cyclo(L-Trp-L-Trp) + 2 dimethylallyl diphosphate = cyclo(N(8)-(alpha,alpha-dimethylallyl)-L-Trp-6a-(alpha,alpha-dimethylallyl)-L-Trp) + 2 diphosphate. It participates in alkaloid biosynthesis. Prenyltransferase; part of the gene cluster that mediates the biosynthesis of okaramine B, a prenylated indole alkaloid that possesses an unusual octacyclic ring system, including a four-membered azetidine ring and an eight-membered azocine ring, and that exhibits insecticidal activity against silkworm larvae. Within the pathway, okaC performs asymmetric reverse prenylation of cyclo(L-Trp-L-Trp) at N-1 and C-2' of the indole ring to produce the cyclic prenylated tryptophan dimer cyclo(N8-(alpha,alpha-dimethylallyl)-L-Trp-6a-(alpha,alpha-dime-thylallyl)-L-Trp). The biosynthesis begins with the NRPS okaA that condenses two tryptophan molecules into cyclo(L-Trp-L-Trp). Prenylation by the prenyltransferase okaC then leads to the formation of cyclo(N8-(alpha,alpha-dimethylallyl)-L-Trp-6a-(alpha,alpha-dime-thylallyl)-L-Trp). This is followed by indole 2,3-epoxidation by the FAD-dependent monooxygenase okaB to facilitate the formation of the hexahydropyrrolo[2,3-b]indole (HPI) moiety of okaramine C. The cytochrome P450 monooxygenase okaD then likely catalyzes formation of the eight-membered ring of okaramine A. The dioxygenase okaE further forms the unusual 2-dimethyl-3-methyl-azetidine ring to yield 12-deshydroxyl okaramine E, as well as the hydroxylation of 12-deshydroxyl okaramine E to produce okaramine E. The cytochrome P450 monoxygenase okaG converts 12-deshydroxyl okaramine E into 3-desmethyl okaramine B which is further methylated by the methyltransferase okaF into okaramine B. In a shunt pathway, okaG and okaF together are also able to convert okaramine E into okaramine D. Okaramine H is produced by nonenzymatic conversion from okaramine A. The sequence is that of Prenyltransferase okaC from Penicillium ochrochloron.